The sequence spans 362 residues: Peptide chain release factor 2 (362 aa).

Position 250 is an N5-methylglutamine (Gln-250).

It belongs to the prokaryotic/mitochondrial release factor family. Post-translationally, methylated by PrmC. Methylation increases the termination efficiency of RF2.

It is found in the cytoplasm. In terms of biological role, peptide chain release factor 2 directs the termination of translation in response to the peptide chain termination codons UGA and UAA. In Clostridium perfringens (strain ATCC 13124 / DSM 756 / JCM 1290 / NCIMB 6125 / NCTC 8237 / Type A), this protein is Peptide chain release factor 2.